The chain runs to 188 residues: MSIKSDKWIRRMAEQQGMIAPFAPELVRSNEGGKIVSYGTSSYGYDVRCANEFKIFTNINSTIVDPKDFDARNFVDFVGDVCIIPPNSFALARTVEFFRIPRNVLTVCLGKSTYARCGIIVNVTPLEPEWEGHVTLEFSNTTPLPAKIYANEGVAQMLFFESDEECETSYKDRGGKYFGQTGVTLPKI.

Residues 111-116, 135-137, Q156, Y170, and Q180 each bind dCTP; these read KSTYAR and TLE. Catalysis depends on E137, which acts as the Proton donor/acceptor.

Belongs to the dCTP deaminase family. In terms of assembly, homotrimer.

The enzyme catalyses dCTP + H2O + H(+) = dUTP + NH4(+). Its pathway is pyrimidine metabolism; dUMP biosynthesis; dUMP from dCTP (dUTP route): step 1/2. Its function is as follows. Catalyzes the deamination of dCTP to dUTP. The polypeptide is dCTP deaminase (Azoarcus sp. (strain BH72)).